The primary structure comprises 446 residues: Glutamyl-tRNA reductase (446 aa).

Substrate is bound by residues T49–R52, S109, E114–Q116, and Q120. The active-site Nucleophile is the C50. G189–G194 is a binding site for NADP(+).

It belongs to the glutamyl-tRNA reductase family. As to quaternary structure, homodimer.

It carries out the reaction (S)-4-amino-5-oxopentanoate + tRNA(Glu) + NADP(+) = L-glutamyl-tRNA(Glu) + NADPH + H(+). It functions in the pathway porphyrin-containing compound metabolism; protoporphyrin-IX biosynthesis; 5-aminolevulinate from L-glutamyl-tRNA(Glu): step 1/2. Catalyzes the NADPH-dependent reduction of glutamyl-tRNA(Glu) to glutamate 1-semialdehyde (GSA). In Exiguobacterium sibiricum (strain DSM 17290 / CCUG 55495 / CIP 109462 / JCM 13490 / 255-15), this protein is Glutamyl-tRNA reductase.